The primary structure comprises 391 residues: Phosphoglycerate kinase (391 aa).

Residues 21-23 (DLN), arginine 36, 59-62 (HLGR), arginine 113, and arginine 146 each bind substrate. ATP is bound by residues lysine 197, glutamate 319, and 345–348 (GGDT).

Belongs to the phosphoglycerate kinase family. In terms of assembly, monomer.

It is found in the cytoplasm. The catalysed reaction is (2R)-3-phosphoglycerate + ATP = (2R)-3-phospho-glyceroyl phosphate + ADP. Its pathway is carbohydrate degradation; glycolysis; pyruvate from D-glyceraldehyde 3-phosphate: step 2/5. In Shewanella halifaxensis (strain HAW-EB4), this protein is Phosphoglycerate kinase.